A 314-amino-acid chain; its full sequence is Elongation factor Ts (314 aa).

The involved in Mg(2+) ion dislocation from EF-Tu stretch occupies residues 82 to 85; that stretch reads TDFV.

It belongs to the EF-Ts family.

The protein resides in the cytoplasm. Its function is as follows. Associates with the EF-Tu.GDP complex and induces the exchange of GDP to GTP. It remains bound to the aminoacyl-tRNA.EF-Tu.GTP complex up to the GTP hydrolysis stage on the ribosome. This Nostoc punctiforme (strain ATCC 29133 / PCC 73102) protein is Elongation factor Ts.